The sequence spans 661 residues: Phospholipid:diacylglycerol acyltransferase (661 aa).

A disordered region spans residues 1–71 (MGTLFRRNVQ…FDRKRDGNGR (71 aa)). The Cytoplasmic portion of the chain corresponds to 1 to 80 (MGTLFRRNVQ…RKRWRDSRRL (80 aa)). A compositionally biased stretch (basic residues) spans 34–48 (HIHHQQGLGHKRRRG). 2 short sequence motifs (bipartite nuclear localization signal) span residues 43–50 (HKRRRGIS) and 64–71 (RKRDGNGR). Basic and acidic residues predominate over residues 54–70 (KRNERGKDFDRKRDGNG). Residues 81–101 (IFILGAFLGVLLPFSFGAYHV) form a helical membrane-spanning segment. The Lumenal portion of the chain corresponds to 102 to 661 (HNSDSDLFDN…QWVSQMPFPM (560 aa)). Glutamine 162 serves as a coordination point for substrate. The GHSXG lipase motif signature appears at 322-326 (GHSMG). Catalysis depends on serine 324, which acts as the Acyl-ester intermediate. Methionine 325 serves as a coordination point for substrate. Residues asparagine 453, asparagine 461, and asparagine 469 are each glycosylated (N-linked (GlcNAc...) asparagine). The Charge relay system role is filled by aspartate 567. An N-linked (GlcNAc...) asparagine glycan is attached at asparagine 594. Histidine 618 serves as the catalytic Charge relay system.

This sequence belongs to the AB hydrolase superfamily. Lipase family.

The protein localises to the endoplasmic reticulum membrane. It localises to the nucleus inner membrane. It carries out the reaction a glycerophospholipid + a 1,2-diacyl-sn-glycerol = a monoacylglycerophospholipid + a triacyl-sn-glycerol. The enzyme catalyses a 1-acyl-sn-glycerol + a 1,2-diacyl-sn-glycero-3-phosphocholine = a 1-acyl-sn-glycero-3-phosphocholine + a 1,2-diacyl-sn-glycerol. It catalyses the reaction 1,2-di-(9Z-octadecenoyl)-sn-glycero-3-phosphoethanolamine + 1,2-di-(9Z-octadecenoyl)-sn-glycerol = 1-(9Z-octadecenoyl)-sn-glycero-3-phosphoethanolamine + 1,2,3-tri-(9Z-octadecenoyl)-glycerol. The catalysed reaction is 1,2-di-(9Z-octadecenoyl)-sn-glycerol + 1,2-di-(9Z-octadecenoyl)-sn-glycero-3-phosphocholine = 1,2,3-tri-(9Z-octadecenoyl)-glycerol + 1-(9Z-octadecenoyl)-sn-glycero-3-phosphocholine. It carries out the reaction 1-(9Z-octadecenoyl)-sn-glycerol + 1,2-di-(9Z-octadecenoyl)-sn-glycero-3-phosphocholine = di-(9Z)-octadecenoylglycerol + 1-(9Z-octadecenoyl)-sn-glycero-3-phosphocholine. The enzyme catalyses 2-(9Z-octadecenoyl)-glycerol + 1,2-di-(9Z-octadecenoyl)-sn-glycero-3-phosphocholine = 1,2-di-(9Z-octadecenoyl)-glycerol + 1-(9Z-octadecenoyl)-sn-glycero-3-phosphocholine. It catalyses the reaction 1-(9Z-octadecenoyl)-2-hexadecanoyl-sn-glycero-3-phosphoethanolamine + 1,2-di-(9Z-octadecenoyl)-sn-glycerol = 1,2-di-(9Z)-octadecenoyl-3-hexadecanoyl-sn-glycerol + 1-(9Z-octadecenoyl)-sn-glycero-3-phosphoethanolamine. The catalysed reaction is 1-(9Z-octadecenoyl)-2-octadecanoyl-sn-glycero-3-phosphoethanolamine + 1,2-di-(9Z-octadecenoyl)-sn-glycerol = 1,2-di-(9Z)-octadecenoyl-3-octadecanoyl-sn-glycerol + 1-(9Z-octadecenoyl)-sn-glycero-3-phosphoethanolamine. It carries out the reaction 1-(9Z)-octadecenoyl-2-(9Z,12Z)-octadecadienoyl-sn-glycero-3-phosphoethanolamine + 1,2-di-(9Z-octadecenoyl)-sn-glycerol = 1,2-di-(9Z)-octadecenoyl-3-(9Z,12Z)-octadecadienoyl-sn-glycerol + 1-(9Z-octadecenoyl)-sn-glycero-3-phosphoethanolamine. Catalyzes triacylglycerol (TAG) formation by an acyl-CoA independent pathway. The enzyme specifically transfers acyl groups from the sn-2 position of a phospholipid to diacylglycerol (DAG), thus forming an sn-1-lysophospholipid. The preferred acyl donors are phosphatidylethanolamine (PE) and phosphatidylcholine (PC). Also capable of using broad acyl donors such as phosphatidic acid (PA), phosphatidylserine (PS), phosphatidylglycerol (PG) and phosphatidylinositol (PI), as well as monogalactosyldiacylglycerol (MGDG), digalactosyldiacylglycerol (DGDG), and acyl-CoA, and it is more likely to use unsaturated acyl donors. As acyl acceptors, it prefers 1,2- over 1,3-diacylglycerol (DAG). Additionally, has esterification activity that can utilize methanol as acyl acceptor to generate fatty acid methyl esters (FAME). Can also utilize ceramide instead of DAG, acylating the ceramides by attaching a fatty acid to the hydroxy group on the first carbon atom of the long-chain base to produce 1-O-acylceramides. Involved in lipid particle synthesis from the endoplasmic reticulum, promoting localized TAG production at discrete ER subdomains. Relocates from the endoplasmic reticulum to a subdomain of the inner nuclear membrane upon nutrient starvation, where it provides a site of TAG synthesis, which is coupled with nuclear membrane remodeling. In Saccharomyces cerevisiae (strain ATCC 204508 / S288c) (Baker's yeast), this protein is Phospholipid:diacylglycerol acyltransferase.